A 348-amino-acid chain; its full sequence is MSDRLTLLRPDDWHIHLRDGAVLQHTVGDVARTFARAIIMPNLVPPVRNALEAGGYRERILAARPAGSRFEPLMVLYLTDRTSPEDIRAAKASGFVYAAKLYPAGATTNSDSGVTSIDNIFPAIEALAETGMPLLVHGEVTRSEIDVFDREKRFIDEHMRRLVERFPTLKVVFEHITTADAAQFVTEAPANVGATITAQHLLYNRNHMLVGGIRPHFYCLPILKRNTHQVALLDAATSGNPKFFLGTDSAPHAKHAKEAACGCAGCYTAYAAIELYAEAFEQRNALDKLEGFASKHGPDFYGLPRNTDTITLVRDEWTAPDSLPFGDNTVIPLRAGEKLRWRLLEDNA.

Zn(2+) contacts are provided by His-14 and His-16. Residues 16–18 and Asn-42 contribute to the substrate site; that span reads HLR. 3 residues coordinate Zn(2+): Lys-100, His-137, and His-175. Lys-100 is subject to N6-carboxylysine. His-137 lines the substrate pocket. Substrate is bound at residue Leu-220. Asp-248 provides a ligand contact to Zn(2+). Residue Asp-248 is part of the active site. Residues His-252 and Ala-264 each contribute to the substrate site.

It belongs to the metallo-dependent hydrolases superfamily. DHOase family. Class II DHOase subfamily. Homodimer. Zn(2+) is required as a cofactor.

The catalysed reaction is (S)-dihydroorotate + H2O = N-carbamoyl-L-aspartate + H(+). It participates in pyrimidine metabolism; UMP biosynthesis via de novo pathway; (S)-dihydroorotate from bicarbonate: step 3/3. Functionally, catalyzes the reversible cyclization of carbamoyl aspartate to dihydroorotate. In Pseudomonas entomophila (strain L48), this protein is Dihydroorotase.